A 348-amino-acid chain; its full sequence is MNMTQARVLVAAVVGLVAVLLYASIHKIEEGHLAVYYRGGALLTSPSGPGYHIMLPFITTFRSVQTTLQTDEVKNVPCGTSGGVMIYIDRIEVVNMLAPYAVFDIVRNYTADYDKTLIFNKIHHELNQFCSAHTLQEVYIELFDQIDENLKQALQKDLNLMAPGLTIQAVRVTKPKIPEAIRRNFELMEAEKTKLLIAAQKQKVVEKEAETERKKAVIEAEKIAQVAKIRFQQKVMEKETEKRISEIEDAAFLAREKAKADAEYYAAHKYATSNKHKLTPEYLELKKYQAIASNSKIYFGSNIPNMFVDSSCALKYSDIRTGRESSLPSKEALEPSGENVIQNKESTG.

Residues 1–7 (MNMTQAR) lie on the Cytoplasmic side of the membrane. The chain crosses the membrane as a helical span at residues 8-28 (VLVAAVVGLVAVLLYASIHKI). Over 29 to 348 (EEGHLAVYYR…NVIQNKESTG (320 aa)) the chain is Lumenal. Asparagine 108 carries an N-linked (GlcNAc...) asparagine glycan. The residue at position 269 (lysine 269) is an N6-acetyllysine. The interval 325 to 348 (SSLPSKEALEPSGENVIQNKESTG) is disordered. The span at 339 to 348 (NVIQNKESTG) shows a compositional bias: polar residues.

Belongs to the band 7/mec-2 family. In terms of assembly, forms a heteromeric complex with ERLIN2. In complex with ERLIN2, interacts with RNF170. Interacts with AMFR and SYVN1. Deubiquitinated by USP25; leading to stabilization. Expressed in heart, placenta, liver, kidney, pancreas, prostate, testis, ovary and small intestine.

It is found in the endoplasmic reticulum membrane. Functionally, component of the ERLIN1/ERLIN2 complex which mediates the endoplasmic reticulum-associated degradation (ERAD) of inositol 1,4,5-trisphosphate receptors (IP3Rs). Involved in regulation of cellular cholesterol homeostasis by regulation the SREBP signaling pathway. Binds cholesterol and may promote ER retention of the SCAP-SREBF complex. Its function is as follows. (Microbial infection) Required early in hepatitis C virus (HCV) infection to initiate RNA replication, and later in the infection to support infectious virus production. In Homo sapiens (Human), this protein is Erlin-1.